Reading from the N-terminus, the 301-residue chain is MAVMTPRRERSSLLSRALQVTAAAATALVTAVSLAAPAHAANPYERGPNPTDALLEASSGPFSVSEENVSRLSASGFGGGTIYYPRENNTYGAVAISPGYTGTEASIAWLGERIASHGFVVITIDTITTLDQPDSRAEQLNAALNHMINRASSTVRSRIDSSRLAVMGHSMGGGGTLRLASQRPDLKAAIPLTPWHLNKNWSSVTVPTLIIGADLDTIAPVATHAKPFYNSLPSSISKAYLELDGATHFAPNIPNKIIGKYSVAWLKRFVDNDTRYTQFLCPGPRDGLFGEVEEYRSTCPF.

A signal peptide spans 1–40 (MAVMTPRRERSSLLSRALQVTAAAATALVTAVSLAAPAHA). Tyr100 serves as a coordination point for poly(ethylene terephthalate). Ser170 (nucleophile) is an active-site residue. Poly(ethylene terephthalate) contacts are provided by Met171 and Trp195. Catalysis depends on charge relay system residues Asp216 and His248. A disulfide bond links Cys281 and Cys299.

It belongs to the AB hydrolase superfamily.

It localises to the secreted. The protein resides in the periplasm. The catalysed reaction is a butanoate ester + H2O = an aliphatic alcohol + butanoate + H(+). It catalyses the reaction (ethylene terephthalate)(n) + H2O = (ethylene terephthalate)(n-1) + 4-[(2-hydroxyethoxy)carbonyl]benzoate + H(+). It carries out the reaction cutin + H2O = cutin monomers.. With respect to regulation, activated by magnesium ions. Activated by calcium ions. Inhibited by the serine hydrolase inhibitor phenylmethanesulfonyl fluoride (PMSF). Catalyzes the hydrolysis of cutin, a polyester that forms the structure of plant cuticle. Shows esterase activity towards p-nitrophenol-linked aliphatic esters (pNP-aliphatic esters). Also hydrolyzes the triglyceride triolein. Capable of degrading the plastic poly(ethylene terephthalate) (PET), the most abundant polyester plastic in the world. This Thermobifida fusca (strain YX) protein is Cutinase.